The sequence spans 490 residues: Homoserine O-acetyltransferase (490 aa).

Residues 47–353 (NAILVCHALT…SQFGHDAFLI (307 aa)) enclose the AB hydrolase-1 domain. The active-site Nucleophile is S152. Substrate is bound at residue R221. Residues D315 and H348 contribute to the active site. D349 contributes to the substrate binding site. 2 consecutive CBS domains span residues 375–432 (MNTQ…YTSL) and 436–490 (MSSQ…GRGP).

The protein belongs to the AB hydrolase superfamily. MetX family. Homodimer.

It localises to the cytoplasm. The catalysed reaction is L-homoserine + acetyl-CoA = O-acetyl-L-homoserine + CoA. The protein operates within amino-acid biosynthesis; L-methionine biosynthesis via de novo pathway; O-acetyl-L-homoserine from L-homoserine: step 1/1. Transfers an acetyl group from acetyl-CoA to L-homoserine, forming acetyl-L-homoserine. The polypeptide is Homoserine O-acetyltransferase (Methanosphaerula palustris (strain ATCC BAA-1556 / DSM 19958 / E1-9c)).